We begin with the raw amino-acid sequence, 898 residues long: Filament-like plant protein 7 (898 aa).

Coiled-coil stretches lie at residues 23 to 224 and 287 to 320; these read EVVA…TAEA and EKIN…LQFS. Disordered stretches follow at residues 429 to 482, 693 to 723, and 777 to 835; these read DNRP…DIKS, PGNQ…KLEE, and KSNN…GGNS. The span at 434–459 shows a compositional bias: low complexity; sequence SSPICSSDSISATGPVENESNENSSE. A compositionally biased stretch (polar residues) spans 460-469; it reads ATKTSGTVYS. Positions 703-764 form a coiled coil; the sequence is VEEEANDKTA…KALTNSKETA (62 aa). Basic and acidic residues predominate over residues 808–822; that stretch reads MKAEDHNTGESKDQK.

This sequence belongs to the FPP family. Interacts with WPP/MAF proteins.

This Arabidopsis thaliana (Mouse-ear cress) protein is Filament-like plant protein 7 (FPP7).